The sequence spans 554 residues: Protein PNS1 (554 aa).

Composition is skewed to low complexity over residues 1-19 (MSGP…NNNN) and 27-45 (SYQM…QPQY). A disordered region spans residues 1–90 (MSGPQYGAQP…TDGYGGPPPS (90 aa)). Topologically, residues 1-105 (MSGPQYGAQP…KVQKPKYNDW (105 aa)) are cytoplasmic. The span at 68–90 (PQGPPPNGSKPPPTDGYGGPPPS) shows a compositional bias: pro residues. Residues 106–126 (WAGLLFLATVAGFVAVSAISI) form a helical membrane-spanning segment. The Extracellular portion of the chain corresponds to 127–153 (HGYADNRSQNNGSLNGQRNTFGLTTHT). Residues Asn-132 and Asn-137 are each glycosylated (N-linked (GlcNAc...) asparagine). A helical membrane pass occupies residues 154-174 (IYLFVWVLICAIVLSYAYMWM). The Cytoplasmic segment spans residues 175–181 (ARKFTKQ). The chain crosses the membrane as a helical span at residues 182 to 202 (FIYATGILNIVMGLVTALYML). Topologically, residues 203-206 (SRKY) are extracellular. The helical transmembrane segment at 207–227 (WSGGIVFLIFVVLQALFFWSC) threads the bilayer. Residues 228 to 255 (RSRIPFSTLMLQTAIDVSKVHGHVYLVS) lie on the Cytoplasmic side of the membrane. Residues 256–276 (AVGGVIGTLFAAYWAITLVAV) traverse the membrane as a helical segment. At 277-297 (YVKFEPDPNNAACRNAGGCSS) the chain is on the extracellular side. Residues 298–318 (GKVIGLIVFITFAGYWISEWL) form a helical membrane-spanning segment. Over 319 to 352 (KNTIHTTVAGIYGSWYFNSRNYPTKVTRGALKRS) the chain is Cytoplasmic. A helical membrane pass occupies residues 353–373 (LTYSFGSISLGSLFIAIINLI). Residues 374–389 (RQLAQAAQQNAAQEGD) are Extracellular-facing. A helical transmembrane segment spans residues 390 to 410 (ILGTILWCIFGCLIGILDWLV). Residues 411–451 (EFINRYAFCHIALYGKAYFAAAKDTWKMVKDRGIDALINEC) lie on the Cytoplasmic side of the membrane. Residues 452–472 (LIGPVLTFGATFVAYACGLIA) form a helical membrane-spanning segment. The Extracellular segment spans residues 473-487 (YLYMVYTKPAYNDGG). The helical transmembrane segment at 488-508 (GFTPVVVAFAFLIGLQVCNVF) threads the bilayer. Topologically, residues 509 to 554 (TTPLTSGIDTIFVAMAWDPEVLMRDHPDLYHRMVQVYPHVQEAIHA) are cytoplasmic.

This sequence belongs to the CTL (choline transporter-like) family.

It is found in the cell membrane. In terms of biological role, probably involved in transport through the plasma membrane. The protein is Protein PNS1 (pns-1) of Neurospora crassa (strain ATCC 24698 / 74-OR23-1A / CBS 708.71 / DSM 1257 / FGSC 987).